A 118-amino-acid chain; its full sequence is uncharacterized protein (118 aa).

Transmembrane regions (helical) follow at residues valine 20–isoleucine 39, leucine 46–valine 63, and leucine 67–glycine 85. The disordered stretch occupies residues glycine 85–glutamate 118. Over residues serine 88–serine 97 the composition is skewed to basic residues. The segment covering aspartate 103–glutamate 118 has biased composition (acidic residues).

The protein localises to the cell membrane. This is an uncharacterized protein from Archaeoglobus fulgidus (strain ATCC 49558 / DSM 4304 / JCM 9628 / NBRC 100126 / VC-16).